The sequence spans 854 residues: Periodic tryptophan protein 2 homolog (854 aa).

WD repeat units lie at residues 9–52 (NLVG…TFPF), 53–93 (ENHK…LHYF), 94–132 (NFKSPVGAIEFSPNGKFFAVSLGKLIQVWRTPNSLEERE), 144–183 (GHFDDIVSISWSADSRFFISTSKDLTARLHSVDPIEGFHP), 188–227 (GHKNTVVSGFFSKDQQTIYTVSKDGALFVWKYSPLFQAGE), 252–291 (NQNSKLRCAAFHPTSNLLVVGFSSGLFGIYELPSFTMLYQ), 294–334 (ITQS…YVLK), 337–376 (SHYDALSTLQYSSDGQRIITGADDGKIKVWDMNSGFCIVT), 379–418 (QHTSAVSGLCFSKRGNVLFSSSLDGSVRAWDLIRYRNFRT), 422–464 (PSRV…ETLA), 465–504 (GHEGPVSSLSFNSSGSLLASGSWDKTVRIWDIFSRSGIVE), 507–546 (PIPSDVLSLAFHPDGKEVCVASLDGQLTFWNVQEGKQTSL), and 569–608 (SLNKTFTSICYSADGSCVLSAGTSKYVCLYDIITGVLIKK). Thr-640 carries the post-translational modification Phosphothreonine. Ser-645 is subject to Phosphoserine. Residues 668–709 (TRPEIICHGVQFSPSGGAFAAATTEGLMIYSLYNDFLFDPIN) form a WD 14 repeat.

It belongs to the WD repeat PWP2 family.

The sequence is that of Periodic tryptophan protein 2 homolog from Schizosaccharomyces pombe (strain 972 / ATCC 24843) (Fission yeast).